Reading from the N-terminus, the 198-residue chain is Small ribosomal subunit protein uS4 (198 aa).

Residues Ser-91 to Glu-151 form the S4 RNA-binding domain.

This sequence belongs to the universal ribosomal protein uS4 family. As to quaternary structure, part of the 30S ribosomal subunit. Contacts protein S5. The interaction surface between S4 and S5 is involved in control of translational fidelity.

Functionally, one of the primary rRNA binding proteins, it binds directly to 16S rRNA where it nucleates assembly of the body of the 30S subunit. Its function is as follows. With S5 and S12 plays an important role in translational accuracy. The chain is Small ribosomal subunit protein uS4 from Phytoplasma australiense.